Consider the following 1134-residue polypeptide: Envelopment polyprotein (1134 aa).

The signal sequence occupies residues 1-18 (MGIWKWLVMASLVWPVLT). The Lumenal portion of the chain corresponds to 19 to 487 (LRNVYDMKIE…GFHGWATAAL (469 aa)). Cystine bridges form between Cys29-Cys151, Cys63-Cys157, Cys109-Cys128, Cys133-Cys138, Cys175-Cys185, Cys210-Cys247, Cys234-Cys351, and Cys380-Cys389. Asn134 is a glycosylation site (N-linked (GlcNAc...) asparagine; by host). N-linked (GlcNAc...) asparagine; by host glycosylation is found at Asn235 and Asn347. Asn399 carries an N-linked (GlcNAc...) asparagine; by host glycan. Disulfide bonds link Cys405-Cys424 and Cys452-Cys475. The helical transmembrane segment at 488–508 (LVTFCFGWVLIPAVTFIILAI) threads the bilayer. The Cytoplasmic portion of the chain corresponds to 509–627 (LKFIANIFHT…LNLFRYKSRC (119 aa)). The interval 516–533 (FHTSNQENRLKSVLRKIK) is binding to the ribonucleoprotein. CCHC-type zinc fingers lie at residues 545–565 (CDVC…GVSC) and 570–591 (CPYC…YKVC). 3 binding to the ribonucleoprotein regions span residues 588–605 (YKVC…KKTV), 592–603 (QVTHRFRDDLKK), and 611–625 (TPGC…RYKS). One can recognise an ITAM domain in the interval 611-634 (TPGCYRTLNLFRYKSRCYIFTMWI). The YxxL signature appears at 615-618 (YRTL). The chain crosses the membrane as a helical span at residues 628–648 (YIFTMWIFLLVLESILWAASA). Residues 649 to 1104 (SETPLTPVWN…EWISGIFSGN (456 aa)) are Lumenal-facing. Intrachain disulfides connect Cys734/Cys769, Cys738/Cys776, Cys750/Cys884, Cys764/Cys895, Cys779/Cys903, Cys805/Cys814, and Cys822/Cys831. The interval 756–776 (YQYETSWGCNPSDCPGCGTGC) is fusion loop. Asn927 carries an N-linked (GlcNAc...) asparagine; by host glycan. Cystine bridges form between Cys969/Cys999, Cys992/Cys1044, Cys1009/Cys1014, Cys1045/Cys1050, and Cys1084/Cys1088. The chain crosses the membrane as a helical span at residues 1105–1125 (WIVLIVLCVFLLFSLVLLSIL). A binding to the ribonucleoprotein region spans residues 1121-1134 (LLSILCPVRKHKKS). The Cytoplasmic portion of the chain corresponds to 1126-1134 (CPVRKHKKS).

It belongs to the hantavirus envelope glycoprotein family. Homodimer. Homotetramer; forms heterotetrameric Gn-Gc spikes in the pre-fusion conformation. Interacts (via C-terminus) with the nucleoprotein. Interacts with host TUFM; this interaction contributes to the virus-induced degradation of mitochondria by autophagy, which leads to degradation of host MAVS and inhibition of type I interferon (IFN) responses. Interacts with host MAP1LC3B; this interaction contributes to the virus-induced degradation of mitochondria by autophagy, which leads to degradation of host MAVS and inhibition of type I interferon (IFN) responses. In terms of assembly, homodimer. Homotetramer; forms heterotetrameric Gn-Gc spikes in the pre-fusion conformation. Homotrimer; forms homotrimer in the post-fusion conformation at acidic pH. Interacts (via C-terminus) with the nucleoprotein. In terms of processing, envelope polyprotein precursor is quickly cleaved in vivo just after synthesis, presumably by host signal peptidase.

The protein localises to the virion membrane. It is found in the host cell surface. It localises to the host Golgi apparatus membrane. The protein resides in the host endoplasmic reticulum membrane. Its subcellular location is the host mitochondrion. Its function is as follows. Forms homotetramers with glycoprotein C at the surface of the virion. Attaches the virion to host cell receptors including integrin ITGAV/ITGB3. This attachment induces virion internalization predominantly through clathrin-dependent endocytosis. May also bind to host C1QBP for virus entry into the host cell. Mediates the assembly and budding of infectious virus particles through its interaction with the nucleocapsid protein and the viral genome. May dysregulate normal immune and endothelial cell responses through an ITAM motif. Translocates to mitochondria, binds to host TUFM and recruits MAP1LC3B. These interactions induce mitochondrial autophagy and therefore destruction of host MAVS leading to inhibition of type I interferon (IFN) responses. Concomitant breakdown of glycoprotein N is apparently prevented by the nucleoprotein that may inhibit Gn-stimulated autophagosome-lysosome fusion. Interacts with the viral genomic RNA. In terms of biological role, forms homotetramers with glycoprotein N at the surface of the virion. Attaches the virion to host cell receptors including integrin ITGAV/ITGB3. This attachment induces virion internalization predominantly through clathrin-dependent endocytosis. May also bind to host C1QBP for virus entry into the host cell. Class II fusion protein that promotes fusion of viral membrane with host endosomal membrane after endocytosis of the virion. This is Envelopment polyprotein (GP) from Apodemus agrarius (Eurasian field mouse).